We begin with the raw amino-acid sequence, 116 residues long: Protein Wnt-5(III) (116 aa).

S1 is lipidated: O-palmitoleoyl serine; by PORCN. N69 carries an N-linked (GlcNAc...) asparagine glycan. Cysteines 82 and 97 form a disulfide.

It belongs to the Wnt family. Palmitoleoylation is required for efficient binding to frizzled receptors. Depalmitoleoylation leads to Wnt signaling pathway inhibition.

The protein resides in the secreted. It localises to the extracellular space. It is found in the extracellular matrix. Its function is as follows. Ligand for members of the frizzled family of seven transmembrane receptors. Probable developmental protein. May be a signaling molecule which affects the development of discrete regions of tissues. Is likely to signal over only few cell diameters. This is Protein Wnt-5(III) (WNT-5(III)) from Eptatretus stoutii (Pacific hagfish).